We begin with the raw amino-acid sequence, 335 residues long: NADH-quinone oxidoreductase subunit H (335 aa).

The next 8 helical transmembrane spans lie at 12-32, 81-101, 114-134, 154-174, 187-207, 238-258, 270-290, and 307-327; these read IIAV…GALL, VIFT…FAVI, IGLL…LFAG, VSYE…VGSF, LWFI…GVAV, FFVG…TLFF, SLAF…FILL, and WKFC…IVLL.

It belongs to the complex I subunit 1 family. As to quaternary structure, NDH-1 is composed of 13 different subunits. Subunits NuoA, H, J, K, L, M, N constitute the membrane sector of the complex.

Its subcellular location is the cell inner membrane. It catalyses the reaction a quinone + NADH + 5 H(+)(in) = a quinol + NAD(+) + 4 H(+)(out). NDH-1 shuttles electrons from NADH, via FMN and iron-sulfur (Fe-S) centers, to quinones in the respiratory chain. The immediate electron acceptor for the enzyme in this species is believed to be ubiquinone. Couples the redox reaction to proton translocation (for every two electrons transferred, four hydrogen ions are translocated across the cytoplasmic membrane), and thus conserves the redox energy in a proton gradient. This subunit may bind ubiquinone. This Pseudomonas syringae pv. tomato (strain ATCC BAA-871 / DC3000) protein is NADH-quinone oxidoreductase subunit H.